The chain runs to 238 residues: uncharacterized protein (238 aa).

Disordered regions lie at residues Phe123–Gly167 and Ser180–Arg238. A compositionally biased stretch (low complexity) spans Ser152–His161. Over residues His207–Arg238 the composition is skewed to basic residues.

Belongs to the PNP/MTAP phosphorylase family.

This is an uncharacterized protein from Rhodospirillum rubrum.